Here is a 152-residue protein sequence, read N- to C-terminus: MSSKLEQLQALLAPVVEGLGYQCWGIEYVSQGKHSVLRIYIDKEGGILVEDCEAVSRQASAILDVEDPISSEYTLEVSSPGMDRPLFTLEQFASHAGEQVKIKLRSPFEGRRNFQGLLRGVEEQDVVVQVDNQEFLLPIDSIDKANIIPSFD.

It belongs to the RimP family.

It is found in the cytoplasm. Functionally, required for maturation of 30S ribosomal subunits. This chain is Ribosome maturation factor RimP, found in Pseudomonas putida (strain GB-1).